We begin with the raw amino-acid sequence, 193 residues long: Ion-translocating oxidoreductase complex subunit A (193 aa).

6 consecutive transmembrane segments (helical) span residues phenylalanine 4–glycine 24, isoleucine 39–valine 59, phenylalanine 71–valine 91, alanine 102–leucine 122, leucine 134–methionine 154, and phenylalanine 167–phenylalanine 187.

Belongs to the NqrDE/RnfAE family. In terms of assembly, the complex is composed of six subunits: RnfA, RnfB, RnfC, RnfD, RnfE and RnfG.

It is found in the cellular chromatophore membrane. Its function is as follows. Part of a membrane-bound complex that couples electron transfer with translocation of ions across the membrane. The sequence is that of Ion-translocating oxidoreductase complex subunit A from Cereibacter sphaeroides (strain ATCC 17029 / ATH 2.4.9) (Rhodobacter sphaeroides).